Here is a 373-residue protein sequence, read N- to C-terminus: tRNA-specific 2-thiouridylase MnmA (373 aa).

ATP is bound by residues 12-19 and methionine 38; that span reads GMSGGVDS. Residues 98–100 are interaction with target base in tRNA; the sequence is NPD. The active-site Nucleophile is the cysteine 103. Cysteine 103 and cysteine 200 are joined by a disulfide. Glycine 128 serves as a coordination point for ATP. Positions 150-152 are interaction with tRNA; that stretch reads KDQ. Cysteine 200 (cysteine persulfide intermediate) is an active-site residue. Residues 312–313 form an interaction with tRNA region; the sequence is RY.

It belongs to the MnmA/TRMU family. Interacts with TusE.

Its subcellular location is the cytoplasm. It catalyses the reaction S-sulfanyl-L-cysteinyl-[protein] + uridine(34) in tRNA + AH2 + ATP = 2-thiouridine(34) in tRNA + L-cysteinyl-[protein] + A + AMP + diphosphate + H(+). Catalyzes the 2-thiolation of uridine at the wobble position (U34) of tRNA(Lys), tRNA(Glu) and tRNA(Gln), leading to the formation of s(2)U34, the first step of tRNA-mnm(5)s(2)U34 synthesis. Sulfur is provided by IscS, via a sulfur-relay system. Binds ATP and its substrate tRNAs. This chain is tRNA-specific 2-thiouridylase MnmA, found in Yersinia enterocolitica serotype O:8 / biotype 1B (strain NCTC 13174 / 8081).